The sequence spans 144 residues: Large ribosomal subunit protein uL15 (144 aa).

The disordered stretch occupies residues 1–54 (MRLNTLSPAEGSKKAGKRLGRGIGSGLGKTGGRGHKGQKSRSGGGVRRGFEGGQ). Gly residues predominate over residues 21–31 (RGIGSGLGKTG).

Belongs to the universal ribosomal protein uL15 family. In terms of assembly, part of the 50S ribosomal subunit.

Functionally, binds to the 23S rRNA. The chain is Large ribosomal subunit protein uL15 from Klebsiella pneumoniae (strain 342).